Consider the following 101-residue polypeptide: MVNVTVTFTITEFCLHTGVSEEELNEIVGLGVIEPCENETASWLFDDHAAIVVQRALRLRQELALDWPGIAMTLTLLEENDRLRQENRLLIQRLSRFIKHP.

This sequence belongs to the CbpM family.

Functionally, interacts with CbpA and inhibits both the DnaJ-like co-chaperone activity and the DNA binding activity of CbpA. Together with CbpA, modulates the activity of the DnaK chaperone system. Does not inhibit the co-chaperone activity of DnaJ. This Citrobacter koseri (strain ATCC BAA-895 / CDC 4225-83 / SGSC4696) protein is Chaperone modulatory protein CbpM.